A 146-amino-acid polypeptide reads, in one-letter code: VHFTAEEKSVITGLWGKVNVEETGGEAVGRLLVVYPWTQRFFDSFGNMSSPSAIMGNPKVKAHGKKVLTSFGDAVKNMDNLKGTFAKLSELHCDKLHVDPENFRLLGNMIVIILASHFGGEFTPEVQAAWQKLVAGVATALAHKYH.

The Globin domain maps to 2–146; sequence HFTAEEKSVI…VATALAHKYH (145 aa). Heme b is bound by residues His-63 and His-92.

This sequence belongs to the globin family.

This is Hemoglobin subunit theta from Sus scrofa (Pig).